We begin with the raw amino-acid sequence, 69 residues long: Large ribosomal subunit protein bL31 (69 aa).

Positions 16, 18, 37, and 40 each coordinate Zn(2+).

This sequence belongs to the bacterial ribosomal protein bL31 family. Type A subfamily. In terms of assembly, part of the 50S ribosomal subunit. Requires Zn(2+) as cofactor.

Its function is as follows. Binds the 23S rRNA. This is Large ribosomal subunit protein bL31 from Syntrophotalea carbinolica (strain DSM 2380 / NBRC 103641 / GraBd1) (Pelobacter carbinolicus).